The chain runs to 556 residues: MKTDIEIAQSIELKPIVDVVEKLGISYDDLELYGKYKAKLSFDKIRAVESNPVGKLILVTAINPTPAGEGKSTLTIGLADALNKIGKKTMIAIREPSLGPVMGIKGGAAGGGYAQVLPMEDINLHFTGDMHAITTANNALSALIDNHLHQGNELGIDQRRILWKRVVDLNDRALRHVTVGLGGPLNGIPREDGFDITVASEIMAILCLATDIEDLKRRLANIVIGYRYDRTPVSVGDLQVEGALALILKDAIKPNLVQTIYGTPAFVHGGPFANIAHGCNSVLATTTALHLADYTVTEAGFGADLGAEKFLDIKTPNLPTSPDAVVIVATLRALKMNGGVAKDALTEENVEAVRAGFANLKRHVENIRKFGIPAVVAINEFVSDTEAEIAVLKELCASIDVPVELASVWADGAEGGVALAETVVKTIAENPANYKRLYDNDLSVQEKIEKIVTEIYRGSKVNFEKKSQTQIAQIVQNGWDKLPICMAKTQYSFSDNPNALGAPENFEITIRELVPKLGAGFIVALTGDVMTMPGLPKRPAALNMDVESDGTVLGLF.

Residue 65–72 coordinates ATP; the sequence is TPAGEGKS.

This sequence belongs to the formate--tetrahydrofolate ligase family.

It catalyses the reaction (6S)-5,6,7,8-tetrahydrofolate + formate + ATP = (6R)-10-formyltetrahydrofolate + ADP + phosphate. It participates in one-carbon metabolism; tetrahydrofolate interconversion. The chain is Formate--tetrahydrofolate ligase from Streptococcus pneumoniae (strain ATCC 700669 / Spain 23F-1).